We begin with the raw amino-acid sequence, 248 residues long: Ribosomal RNA small subunit methyltransferase G (248 aa).

S-adenosyl-L-methionine contacts are provided by residues glycine 85, phenylalanine 90, 108–110, 137–138, and arginine 156; these read DSS and AE.

The protein belongs to the methyltransferase superfamily. RNA methyltransferase RsmG family.

Its subcellular location is the cytoplasm. Specifically methylates the N7 position of a guanine in 16S rRNA. In Prochlorococcus marinus (strain NATL2A), this protein is Ribosomal RNA small subunit methyltransferase G.